The sequence spans 447 residues: N-succinylarginine dihydrolase (447 aa).

Residues 19-28, Asn110, and 137-138 contribute to the substrate site; these read AGLSFGNEAS and HR. The active site involves Glu174. Substrate is bound at residue Arg212. Residue His248 is part of the active site. 2 residues coordinate substrate: Asp250 and Asn359. Residue Cys365 is the Nucleophile of the active site.

Belongs to the succinylarginine dihydrolase family. In terms of assembly, homodimer.

It catalyses the reaction N(2)-succinyl-L-arginine + 2 H2O + 2 H(+) = N(2)-succinyl-L-ornithine + 2 NH4(+) + CO2. It functions in the pathway amino-acid degradation; L-arginine degradation via AST pathway; L-glutamate and succinate from L-arginine: step 2/5. In terms of biological role, catalyzes the hydrolysis of N(2)-succinylarginine into N(2)-succinylornithine, ammonia and CO(2). In Escherichia fergusonii (strain ATCC 35469 / DSM 13698 / CCUG 18766 / IAM 14443 / JCM 21226 / LMG 7866 / NBRC 102419 / NCTC 12128 / CDC 0568-73), this protein is N-succinylarginine dihydrolase.